A 198-amino-acid polypeptide reads, in one-letter code: V-type ATP synthase subunit E (198 aa).

The protein belongs to the V-ATPase E subunit family.

In terms of biological role, produces ATP from ADP in the presence of a proton gradient across the membrane. The sequence is that of V-type ATP synthase subunit E from Clostridium novyi (strain NT).